Here is a 933-residue protein sequence, read N- to C-terminus: Phospholipase D2 (933 aa).

Disordered regions lie at residues 1 to 20 and 134 to 160; these read MAAT…SSQL and SPAP…RRTA. The PX domain maps to 65 to 195; that stretch reads VIAQVVGTER…TEFLEVSQLS (131 aa). The 109-residue stretch at 203–311 folds into the PH domain; sequence KGLEGVIRKR…WAQEITELAQ (109 aa). PLD phosphodiesterase domains lie at 437–464 and 751–778; these read TLWA…AYGR and ELIY…NDRS. The segment at 441–788 is catalytic; sequence HHEKLLVVDQ…LLGKRDSELA (348 aa).

It belongs to the phospholipase D family. In terms of assembly, interacts with PIP5K1B. Interacts with EGFR. Phosphorylated by FGR.

It is found in the cell membrane. It carries out the reaction a 1,2-diacyl-sn-glycero-3-phosphocholine + H2O = a 1,2-diacyl-sn-glycero-3-phosphate + choline + H(+). It catalyses the reaction 1,2-dihexadecanoyl-sn-glycero-3-phosphocholine + H2O = 1,2-dihexadecanoyl-sn-glycero-3-phosphate + choline + H(+). Its function is as follows. Function as phospholipase selective for phosphatidylcholine. May have a role in signal-induced cytoskeletal regulation and/or endocytosis. This is Phospholipase D2 (PLD2) from Bos taurus (Bovine).